Here is a 187-residue protein sequence, read N- to C-terminus: 1,6-anhydro-N-acetylmuramyl-L-alanine amidase AmpD (187 aa).

The N-acetylmuramoyl-L-alanine amidase domain maps to 29-167; that stretch reads SLLVVHNISL…APDRKTDPGP (139 aa). His34 contributes to the Zn(2+) binding site. Glu116 acts as the Proton acceptor in catalysis. Residues His154 and Asp164 each coordinate Zn(2+).

It belongs to the N-acetylmuramoyl-L-alanine amidase 2 family. Zn(2+) is required as a cofactor.

It is found in the cytoplasm. It carries out the reaction Hydrolyzes the link between N-acetylmuramoyl residues and L-amino acid residues in certain cell-wall glycopeptides.. In terms of biological role, involved in cell wall peptidoglycan recycling. Specifically cleaves the amide bond between the lactyl group of N-acetylmuramic acid and the alpha-amino group of the L-alanine in degradation products containing an anhydro N-acetylmuramyl moiety. The protein is 1,6-anhydro-N-acetylmuramyl-L-alanine amidase AmpD (ampD) of Salmonella typhimurium (strain SL1344).